The primary structure comprises 808 residues: Zinc finger protein 148 (808 aa).

Disordered stretches follow at residues 15 to 86 (SPVG…ISQD) and 131 to 162 (DSLI…SPAK). A compositionally biased stretch (acidic residues) spans 56–73 (AEDDDDEDEEEDDDDDLA). Residues 150–159 (HKKKKRKQRS) are compositionally biased toward basic residues. 4 consecutive C2H2-type zinc fingers follow at residues 180-202 (HICE…VFIH), 208-230 (FQCN…EKIH), 236-258 (FRCD…KRTH), and 264-287 (YQCD…RMCH). Disordered regions lie at residues 305–338 (RTPE…ASIT), 596–617 (SINS…QAPP), and 705–736 (SFSG…DPQS). Polar residues-rich tracts occupy residues 705 to 718 (SFSG…SVSP) and 725 to 736 (QVTSPKKTDPQS).

Belongs to the krueppel C2H2-type zinc-finger protein family.

Its subcellular location is the nucleus. Functionally, involved in transcriptional regulation. Represses the transcription of a number of genes. Required for primitive and definitive hematopoiesis during embryonic development. In Danio rerio (Zebrafish), this protein is Zinc finger protein 148 (znf148).